The following is a 138-amino-acid chain: Nucleoside diphosphate kinase (138 aa).

K9, F57, R85, T91, R102, and N112 together coordinate ATP. H115 acts as the Pros-phosphohistidine intermediate in catalysis.

The protein belongs to the NDK family. Homotetramer. Requires Mg(2+) as cofactor.

It is found in the cytoplasm. The enzyme catalyses a 2'-deoxyribonucleoside 5'-diphosphate + ATP = a 2'-deoxyribonucleoside 5'-triphosphate + ADP. The catalysed reaction is a ribonucleoside 5'-diphosphate + ATP = a ribonucleoside 5'-triphosphate + ADP. Its function is as follows. Major role in the synthesis of nucleoside triphosphates other than ATP. The ATP gamma phosphate is transferred to the NDP beta phosphate via a ping-pong mechanism, using a phosphorylated active-site intermediate. This chain is Nucleoside diphosphate kinase, found in Deinococcus deserti (strain DSM 17065 / CIP 109153 / LMG 22923 / VCD115).